Reading from the N-terminus, the 140-residue chain is MKIINILFCLFLLMLNGCNSNDTNTKQTKSRQKRDLTQKEATQEKPKSKSKEDLLREKLSDDQKTQLDWLKTALTGVGKFDKFLENDEGKIKSALEHIKTELDKCNGNDEGKNTFKTTVQGFFSGGNIDNFADQATATCN.

The signal sequence occupies residues 1 to 17; it reads MKIINILFCLFLLMLNG. Residue cysteine 18 is the site of N-palmitoyl cysteine attachment. Residue cysteine 18 is the site of S-diacylglycerol cysteine attachment. The disordered stretch occupies residues 22-57; the sequence is DTNTKQTKSRQKRDLTQKEATQEKPKSKSKEDLLRE. Basic and acidic residues predominate over residues 33 to 57; sequence KRDLTQKEATQEKPKSKSKEDLLRE.

This sequence belongs to the Multicopy lipoprotein (Mlp) family.

It is found in the cell outer membrane. In terms of biological role, an outer membrane protein that may participate in pathogenesis. Some human Lyme disease patients have antibodies against this protein. The Mlp proteins probably undergo intragenic recombination, generating new alleles. This chain is Lipoprotein MlpG, found in Borreliella burgdorferi (strain ATCC 35210 / DSM 4680 / CIP 102532 / B31) (Borrelia burgdorferi).